A 182-amino-acid polypeptide reads, in one-letter code: Isopentenyl-diphosphate Delta-isomerase (182 aa).

Residues His-25 and His-32 each contribute to the Mn(2+) site. The region spanning 30–164 (PLHLAFSCWL…PWAFSPWMVM (135 aa)) is the Nudix hydrolase domain. Cys-67 is an active-site residue. His-69 serves as a coordination point for Mn(2+). Glu-87 is a binding site for Mg(2+). The Mn(2+) site is built by Glu-114 and Glu-116. Glu-116 is an active-site residue.

Belongs to the IPP isomerase type 1 family. As to quaternary structure, homodimer. Requires Mg(2+) as cofactor. Mn(2+) serves as cofactor.

The protein localises to the cytoplasm. It catalyses the reaction isopentenyl diphosphate = dimethylallyl diphosphate. Its pathway is isoprenoid biosynthesis; dimethylallyl diphosphate biosynthesis; dimethylallyl diphosphate from isopentenyl diphosphate: step 1/1. Catalyzes the 1,3-allylic rearrangement of the homoallylic substrate isopentenyl (IPP) to its highly electrophilic allylic isomer, dimethylallyl diphosphate (DMAPP). This Salmonella arizonae (strain ATCC BAA-731 / CDC346-86 / RSK2980) protein is Isopentenyl-diphosphate Delta-isomerase.